Here is a 161-residue protein sequence, read N- to C-terminus: Nucleotide-binding protein Bmul_0741/BMULJ_02519 (161 aa).

Belongs to the YajQ family.

Its function is as follows. Nucleotide-binding protein. In Burkholderia multivorans (strain ATCC 17616 / 249), this protein is Nucleotide-binding protein Bmul_0741/BMULJ_02519.